The following is a 351-amino-acid chain: N-formyl peptide receptor 2 (351 aa).

The Extracellular portion of the chain corresponds to 1–27 (METNFSTPLNEYEEVSYESAGYTVLRI). Asparagine 4 is a glycosylation site (N-linked (GlcNAc...) asparagine). The chain crosses the membrane as a helical span at residues 28 to 50 (LPLVVLGVTFVLGVLGNGLVIWV). Over 51 to 61 (AGFRMTRTVTT) the chain is Cytoplasmic. The chain crosses the membrane as a helical span at residues 62–83 (ICYLNLALADFSFTATLPFLIV). Residues 84 to 100 (SMAMGEKWPFGWFLCKL) lie on the Extracellular side of the membrane. Cysteine 98 and cysteine 176 form a disulfide bridge. Residues 101 to 121 (IHIVVDINLFGSVFLIGFIAL) traverse the membrane as a helical segment. The Cytoplasmic portion of the chain corresponds to 122–140 (DRCICVLHPVWAQNHRTVS). The chain crosses the membrane as a helical span at residues 141-162 (LAMKVIVGPWILALVLTLPVFL). Topologically, residues 163–205 (FLTTVTIPNGDTYCTFNFASWGGTPEERLKVAITMLTARGIIR) are extracellular. A helical membrane pass occupies residues 206–226 (FVIGFSLPMSIVAICYGLIAA). Over 227–242 (KIHKKGMIKSSRPLRV) the chain is Cytoplasmic. The chain crosses the membrane as a helical span at residues 243–266 (LTAVVASFFICWFPFQLVALLGTV). The Extracellular segment spans residues 267 to 286 (WLKEMLFYGKYKIIDILVNP). The chain crosses the membrane as a helical span at residues 287 to 306 (TSSLAFFNSCLNPMLYVFVG). Topologically, residues 307–351 (QDFRERLIHSLPTSLERALSEDSAPTNDTAANSASPPAETELQAM) are cytoplasmic. Residues 325 to 351 (LSEDSAPTNDTAANSASPPAETELQAM) form a disordered region. Over residues 329–341 (SAPTNDTAANSAS) the composition is skewed to polar residues.

It belongs to the G-protein coupled receptor 1 family. Interacts with Amyloid-beta protein 42, product of APP; the interaction takes place at the cell surface and the complex is then rapidly internalized. As to quaternary structure, (Microbial infection) Interacts with Staphylococcus aureus protein SSL13; this interaction leads to the activation of neutrophils. In terms of tissue distribution, detected in lung, bone marrow, neutrophils, spleen and testis.

It localises to the cell membrane. Low affinity receptor for N-formyl-methionyl peptides, which are powerful neutrophil chemotactic factors. Binding of FMLP to the receptor causes activation of neutrophils. This response is mediated via a G-protein that activates a phosphatidylinositol-calcium second messenger system. The activation of LXA4R could result in an anti-inflammatory outcome counteracting the actions of pro-inflammatory signals such as LTB4 (leukotriene B4). Receptor for the chemokine-like protein FAM19A5, mediating FAM19A5-stimulated macrophage chemotaxis and the inhibitory effect on TNFSF11/RANKL-induced osteoclast differentiation. Acts as a receptor for humanin. The sequence is that of N-formyl peptide receptor 2 (FPR2) from Homo sapiens (Human).